Consider the following 555-residue polypeptide: Aerobic glycerol-3-phosphate dehydrogenase (555 aa).

24–52 contacts FAD; it reads DLFIIGGGITGAGTALDAASRGMKVALSE.

It belongs to the FAD-dependent glycerol-3-phosphate dehydrogenase family. FAD serves as cofactor.

Its subcellular location is the cytoplasm. The catalysed reaction is a quinone + sn-glycerol 3-phosphate = dihydroxyacetone phosphate + a quinol. It functions in the pathway polyol metabolism; glycerol degradation via glycerol kinase pathway; glycerone phosphate from sn-glycerol 3-phosphate (aerobic route): step 1/1. The chain is Aerobic glycerol-3-phosphate dehydrogenase (glpD) from Bacillus subtilis (strain 168).